Consider the following 151-residue polypeptide: Ribosome maturation factor RimP (151 aa).

This sequence belongs to the RimP family.

It localises to the cytoplasm. Functionally, required for maturation of 30S ribosomal subunits. The polypeptide is Ribosome maturation factor RimP (Shewanella oneidensis (strain ATCC 700550 / JCM 31522 / CIP 106686 / LMG 19005 / NCIMB 14063 / MR-1)).